A 124-amino-acid polypeptide reads, in one-letter code: Ribonuclease pancreatic (124 aa).

Positions 1-24 (KESSAMKFQRQHMDSSGSPSTNAN) are disordered. Substrate is bound by residues K7 and R10. H12 acts as the Proton acceptor in catalysis. A compositionally biased stretch (polar residues) spans 14 to 24 (DSSGSPSTNAN). 4 disulfide bridges follow: C26/C84, C40/C95, C58/C110, and C65/C72. N34 carries an N-linked (GlcNAc...) asparagine glycan. Substrate is bound by residues 41–45 (KPVNT), K66, and R85. The active-site Proton donor is the H119.

It belongs to the pancreatic ribonuclease family. In terms of assembly, monomer. Interacts with and forms tight 1:1 complexes with RNH1. Dimerization of two such complexes may occur. Interaction with RNH1 inhibits this protein. In terms of tissue distribution, pancreas.

It localises to the secreted. It catalyses the reaction an [RNA] containing cytidine + H2O = an [RNA]-3'-cytidine-3'-phosphate + a 5'-hydroxy-ribonucleotide-3'-[RNA].. The catalysed reaction is an [RNA] containing uridine + H2O = an [RNA]-3'-uridine-3'-phosphate + a 5'-hydroxy-ribonucleotide-3'-[RNA].. Functionally, endonuclease that catalyzes the cleavage of RNA on the 3' side of pyrimidine nucleotides. Acts on single-stranded and double-stranded RNA. The protein is Ribonuclease pancreatic (RNASE1) of Chinchilla chinchilla (Short-tailed chinchilla).